Here is a 265-residue protein sequence, read N- to C-terminus: Type II pantothenate kinase (265 aa).

6–13 (DAGGTLIK) is an ATP binding site. Glu-70 acts as the Proton acceptor in catalysis. ATP is bound by residues Thr-99, 121 to 125 (GGMIQ), Tyr-137, and Ser-225.

It belongs to the type II pantothenate kinase family. As to quaternary structure, homodimer.

The protein localises to the cytoplasm. The catalysed reaction is (R)-pantothenate + ATP = (R)-4'-phosphopantothenate + ADP + H(+). It participates in cofactor biosynthesis; coenzyme A biosynthesis; CoA from (R)-pantothenate: step 1/5. Catalyzes the phosphorylation of pantothenate (Pan), the first step in CoA biosynthesis. The protein is Type II pantothenate kinase of Staphylococcus epidermidis (strain ATCC 35984 / DSM 28319 / BCRC 17069 / CCUG 31568 / BM 3577 / RP62A).